Here is a 785-residue protein sequence, read N- to C-terminus: Penicillin-binding protein 1A (785 aa).

Residues 1-6 are Cytoplasmic-facing; it reads MYKSLF. Residues 7 to 27 traverse the membrane as a helical; Signal-anchor for type II membrane protein segment; that stretch reads FFLKIFAILILLGCSVTAYII. The Periplasmic portion of the chain corresponds to 28–785; sequence YHYSHDLPDY…GISDQSQEIY (758 aa). Residues 49 to 220 form a transglycosylase region; it reads TRIYSRDGKL…SELNPDKNYS (172 aa). The Proton donor; for transglycosylase activity role is filled by glutamate 87. Positions 398–711 are transpeptidase; it reads DVIVVEPIKD…SNVVLPIFID (314 aa). The active-site Acyl-ester intermediate; for transpeptidase activity is the serine 457.

The protein in the N-terminal section; belongs to the glycosyltransferase 51 family. In the C-terminal section; belongs to the transpeptidase family.

It is found in the cell inner membrane. It catalyses the reaction [GlcNAc-(1-&gt;4)-Mur2Ac(oyl-L-Ala-gamma-D-Glu-L-Lys-D-Ala-D-Ala)](n)-di-trans,octa-cis-undecaprenyl diphosphate + beta-D-GlcNAc-(1-&gt;4)-Mur2Ac(oyl-L-Ala-gamma-D-Glu-L-Lys-D-Ala-D-Ala)-di-trans,octa-cis-undecaprenyl diphosphate = [GlcNAc-(1-&gt;4)-Mur2Ac(oyl-L-Ala-gamma-D-Glu-L-Lys-D-Ala-D-Ala)](n+1)-di-trans,octa-cis-undecaprenyl diphosphate + di-trans,octa-cis-undecaprenyl diphosphate + H(+). It carries out the reaction Preferential cleavage: (Ac)2-L-Lys-D-Ala-|-D-Ala. Also transpeptidation of peptidyl-alanyl moieties that are N-acyl substituents of D-alanine.. The protein operates within cell wall biogenesis; peptidoglycan biosynthesis. In terms of biological role, cell wall formation. Synthesis of cross-linked peptidoglycan from the lipid intermediates. The enzyme has a penicillin-insensitive transglycosylase N-terminal domain (formation of linear glycan strands) and a penicillin-sensitive transpeptidase C-terminal domain (cross-linking of the peptide subunits). The protein is Penicillin-binding protein 1A (mrcA) of Rickettsia typhi (strain ATCC VR-144 / Wilmington).